We begin with the raw amino-acid sequence, 322 residues long: Malate dehydrogenase (322 aa).

Residues Gly10–Gly15 and Asp34 contribute to the NAD(+) site. Residues Arg83 and Arg89 each contribute to the substrate site. NAD(+) contacts are provided by residues Asn96 and Ile119–Asn121. Residues Asn121 and Arg152 each coordinate substrate. Catalysis depends on His176, which acts as the Proton acceptor.

It belongs to the LDH/MDH superfamily. MDH type 3 family.

The enzyme catalyses (S)-malate + NAD(+) = oxaloacetate + NADH + H(+). Its function is as follows. Catalyzes the reversible oxidation of malate to oxaloacetate. The protein is Malate dehydrogenase of Bradyrhizobium diazoefficiens (strain JCM 10833 / BCRC 13528 / IAM 13628 / NBRC 14792 / USDA 110).